The following is a 619-amino-acid chain: Guanylate cyclase soluble subunit beta-1 (619 aa).

Histidine 105 is a binding site for heme. Residues 421–554 enclose the Guanylate cyclase domain; sequence TILFSGIVGF…NTVNLTSRTE (134 aa).

Belongs to the adenylyl cyclase class-4/guanylyl cyclase family. As to quaternary structure, the active enzyme is formed by a heterodimer of an alpha and a beta subunit. Heterodimer with GUCY1A1. Can also form inactive homodimers in vitro. The cofactor is heme. Detected in brain cortex and cerebellum (at protein level).

The protein localises to the cytoplasm. The catalysed reaction is GTP = 3',5'-cyclic GMP + diphosphate. With respect to regulation, activated by nitric oxide in the presence of magnesium or manganese ions. Functionally, mediates responses to nitric oxide (NO) by catalyzing the biosynthesis of the signaling molecule cGMP. This Homo sapiens (Human) protein is Guanylate cyclase soluble subunit beta-1.